A 104-amino-acid chain; its full sequence is Large ribosomal subunit protein uL24 (104 aa).

Residues 82-92 (RIGYRTDENGK) show a composition bias toward basic and acidic residues. The tract at residues 82 to 104 (RIGYRTDENGKRVRISRRNGKDI) is disordered. Residues 93–104 (RVRISRRNGKDI) show a composition bias toward basic residues.

This sequence belongs to the universal ribosomal protein uL24 family. In terms of assembly, part of the 50S ribosomal subunit.

Its function is as follows. One of two assembly initiator proteins, it binds directly to the 5'-end of the 23S rRNA, where it nucleates assembly of the 50S subunit. In terms of biological role, one of the proteins that surrounds the polypeptide exit tunnel on the outside of the subunit. The polypeptide is Large ribosomal subunit protein uL24 (Nocardia farcinica (strain IFM 10152)).